The sequence spans 567 residues: MIGLGSYGYTAPSSKKINAYDVPQGVDIRGRFDEEFAKILTKDALQFVADLQREFRNHIKYAMECRKEAKRRYNEGALPGFDPATRYIREGKWTCVPFPPAVADRRVEITGPVERKMIINALNSGAKVFMADFEDALSPSWENLMRGQINLKDAVEGTITFNDKARNRVYKLNNEIAKLFVRPRGWHLPEAHIFIDGEPATGCLVDFGLYFYHNYATFRNTQGQGFGPFFYLPKMENSREAKIWNSVFEKAEKMAGIEKGSIRATVLIETLPAVFQMDEIFYELRDHSVGLNCGRWDYIFSYVKTFQGHPDRLLPDRGQVGMTQHFMRSYSDLLIRTCHRRGVHAMGGMAAQIPIRDDPTANEAAFELVRKDKQREVKAGHDGTWAAHPGLIKTCMEVFTNNMGNTPNQIETVKRDYASNLTEDDLLQRPRGVRTMEGLRLNTRVGIQYLAAWLTGSGSVPLYNLMEDAATAEISRVQIWQWLKYGVELDGDGLGVRVNHVFGRVVEEEMARIEREVGKEKFKKGMYKEACKIFTRQCTASTLDDFLTLDAYNYIVIHHPKDVSSKL.

The active-site Proton acceptor is the arginine 182. Catalysis depends on aspartate 468, which acts as the Proton donor. The Microbody targeting signal signature appears at 565–567; the sequence is SKL.

This sequence belongs to the malate synthase family.

It is found in the glyoxysome. It carries out the reaction glyoxylate + acetyl-CoA + H2O = (S)-malate + CoA + H(+). The protein operates within carbohydrate metabolism; glyoxylate cycle; (S)-malate from isocitrate: step 2/2. The chain is Malate synthase, glyoxysomal from Gossypium hirsutum (Upland cotton).